Consider the following 507-residue polypeptide: ATP synthase subunit alpha (507 aa).

169 to 176 (GDRQIGKT) is an ATP binding site.

The protein belongs to the ATPase alpha/beta chains family. In terms of assembly, F-type ATPases have 2 components, CF(1) - the catalytic core - and CF(0) - the membrane proton channel. CF(1) has five subunits: alpha(3), beta(3), gamma(1), delta(1), epsilon(1). CF(0) has three main subunits: a(1), b(2) and c(9-12). The alpha and beta chains form an alternating ring which encloses part of the gamma chain. CF(1) is attached to CF(0) by a central stalk formed by the gamma and epsilon chains, while a peripheral stalk is formed by the delta and b chains.

The protein resides in the cell inner membrane. The catalysed reaction is ATP + H2O + 4 H(+)(in) = ADP + phosphate + 5 H(+)(out). Functionally, produces ATP from ADP in the presence of a proton gradient across the membrane. The alpha chain is a regulatory subunit. The protein is ATP synthase subunit alpha of Desulfotalea psychrophila (strain LSv54 / DSM 12343).